The sequence spans 417 residues: D-inositol 3-phosphate glycosyltransferase (417 aa).

Residue His-15 participates in 1D-myo-inositol 3-phosphate binding. UDP-N-acetyl-alpha-D-glucosamine-binding positions include 21-22 (QP) and Gly-29. 1D-myo-inositol 3-phosphate contacts are provided by residues 26 to 31 (DAGGMN), Lys-84, Tyr-117, Thr-141, and Arg-161. 3 residues coordinate UDP-N-acetyl-alpha-D-glucosamine: Arg-241, Lys-246, and Val-299. Mg(2+)-binding residues include Tyr-308, Arg-309, and Ala-311. Positions 321 and 329 each coordinate UDP-N-acetyl-alpha-D-glucosamine. Thr-335 is a binding site for Mg(2+).

It belongs to the glycosyltransferase group 1 family. MshA subfamily. Homodimer.

The catalysed reaction is 1D-myo-inositol 3-phosphate + UDP-N-acetyl-alpha-D-glucosamine = 1D-myo-inositol 2-acetamido-2-deoxy-alpha-D-glucopyranoside 3-phosphate + UDP + H(+). Functionally, catalyzes the transfer of a N-acetyl-glucosamine moiety to 1D-myo-inositol 3-phosphate to produce 1D-myo-inositol 2-acetamido-2-deoxy-glucopyranoside 3-phosphate in the mycothiol biosynthesis pathway. The polypeptide is D-inositol 3-phosphate glycosyltransferase (Xylanimonas cellulosilytica (strain DSM 15894 / JCM 12276 / CECT 5975 / KCTC 9989 / LMG 20990 / NBRC 107835 / XIL07)).